The chain runs to 435 residues: Tol-Pal system protein TolB (435 aa).

The signal sequence occupies residues 1–20 (MRKIIAGVFIFVFLISNLYA).

It belongs to the TolB family. The Tol-Pal system is composed of five core proteins: the inner membrane proteins TolA, TolQ and TolR, the periplasmic protein TolB and the outer membrane protein Pal. They form a network linking the inner and outer membranes and the peptidoglycan layer.

The protein resides in the periplasm. In terms of biological role, part of the Tol-Pal system, which plays a role in outer membrane invagination during cell division and is important for maintaining outer membrane integrity. In Francisella tularensis subsp. mediasiatica (strain FSC147), this protein is Tol-Pal system protein TolB.